The following is a 512-amino-acid chain: Activin receptor type-2B (512 aa).

Positions 1–24 are cleaved as a signal peptide; it reads MSASWLTLAVLCATLGAGPGHGEA. At 25–137 the chain is on the extracellular side; the sequence is ETRECIYYNA…PPPPTPSLLN (113 aa). 5 disulfides stabilise this stretch: Cys-29–Cys-59, Cys-49–Cys-77, Cys-84–Cys-103, Cys-90–Cys-102, and Cys-104–Cys-109. Residues Asn-42 and Asn-65 are each glycosylated (N-linked (GlcNAc...) asparagine). The chain crosses the membrane as a helical span at residues 138–158; that stretch reads ILVYSLLPIAVLSVAILLAFW. The Cytoplasmic segment spans residues 159 to 512; the sequence is MYRHRKPPYG…VDLPPKESSI (354 aa). A Protein kinase domain is found at 190–478; that stretch reads LQLLEIKARG…LSAGCVEERI (289 aa). ATP is bound by residues 196 to 204 and Lys-217; that span reads KARGRFGCV. Asp-321 acts as the Proton acceptor in catalysis.

The protein belongs to the protein kinase superfamily. TKL Ser/Thr protein kinase family. TGFB receptor subfamily. Mg(2+) serves as cofactor. The cofactor is Mn(2+). Not expressed in hen anterior pituitary during the ovulatory cycle but expressed in the ovarian follicle.

It is found in the membrane. The catalysed reaction is L-threonyl-[receptor-protein] + ATP = O-phospho-L-threonyl-[receptor-protein] + ADP + H(+). It catalyses the reaction L-seryl-[receptor-protein] + ATP = O-phospho-L-seryl-[receptor-protein] + ADP + H(+). Functionally, on ligand binding, forms a receptor complex consisting of two type II and two type I transmembrane serine/threonine kinases. Type II receptors phosphorylate and activate type I receptors which autophosphorylate, then bind and activate SMAD transcriptional regulators. Receptor for activin A, activin B and inhibin A. May modulate neuropeptide expression in dorsal root ganglia (DRG) neurons and ovarian follicle development. The sequence is that of Activin receptor type-2B (ACVR2B) from Gallus gallus (Chicken).